The primary structure comprises 120 residues: uncharacterized protein (120 aa).

The chain crosses the membrane as a helical span at residues 63–83 (IDMSCVICFNFSCHLFVVIFI).

Its subcellular location is the membrane. This is an uncharacterized protein from Saccharomyces cerevisiae (strain ATCC 204508 / S288c) (Baker's yeast).